The chain runs to 225 residues: DnaA regulatory inactivator Hda (225 aa).

It belongs to the DnaA family. HdA subfamily. The active form seems to be an ADP-bound monomer. Forms the RIDA complex (regulatory inactivation of DnaA) of ATP-DnaA, ADP-Hda and the DNA-loaded beta sliding clamp (dnaN).

Functionally, mediates the interaction of DNA replication initiator protein DnaA with DNA polymerase subunit beta sliding clamp (dnaN). Stimulates hydrolysis of ATP-DnaA to ADP-DnaA, rendering DnaA inactive for reinitiation, a process called regulatory inhibition of DnaA or RIDA. This chain is DnaA regulatory inactivator Hda, found in Klebsiella pneumoniae (strain 342).